Consider the following 210-residue polypeptide: FMN-dependent NADH:quinone oxidoreductase (210 aa).

FMN is bound by residues 17–19 (SRS), 102–105 (MWNL), and 148–151 (SCGG).

The protein belongs to the azoreductase type 1 family. In terms of assembly, homodimer. FMN serves as cofactor.

The catalysed reaction is 2 a quinone + NADH + H(+) = 2 a 1,4-benzosemiquinone + NAD(+). It catalyses the reaction N,N-dimethyl-1,4-phenylenediamine + anthranilate + 2 NAD(+) = 2-(4-dimethylaminophenyl)diazenylbenzoate + 2 NADH + 2 H(+). Its function is as follows. Quinone reductase that provides resistance to thiol-specific stress caused by electrophilic quinones. In terms of biological role, also exhibits azoreductase activity. Catalyzes the reductive cleavage of the azo bond in aromatic azo compounds to the corresponding amines. The sequence is that of FMN-dependent NADH:quinone oxidoreductase from Trichlorobacter lovleyi (strain ATCC BAA-1151 / DSM 17278 / SZ) (Geobacter lovleyi).